The primary structure comprises 602 residues: Myotubularin (602 aa).

Positions 1-40 (MASSSASDCDAHPVERESMRKVSQDGVRQDMSKSGPRLPG) are disordered. Over residues 9-31 (CDAHPVERESMRKVSQDGVRQDM) the composition is skewed to basic and acidic residues. Ser-18 carries the post-translational modification Phosphoserine. In terms of domain architecture, GRAM spans 28–97 (RQDMSKSGPR…GVISRIEKMG (70 aa)). The 376-residue stretch at 163 to 538 (GWAIYNPVEE…RHLELWVNYY (376 aa)) folds into the Myotubularin phosphatase domain. A 1,2-diacyl-sn-glycero-3-phospho-(1D-myo-inositol-3,5-bisphosphate)-binding residues include Asn-288, Asn-313, and Ile-314. Positions 288, 313, and 314 each coordinate a 1,2-diacyl-sn-glycero-3-phospho-(1D-myo-inositol-3-phosphate). Cys-375 acts as the Phosphocysteine intermediate in catalysis. A 1,2-diacyl-sn-glycero-3-phospho-(1D-myo-inositol-3,5-bisphosphate) is bound by residues Ser-376, Asp-377, Gly-378, Trp-379, Asp-380, Arg-381, Lys-417, and Arg-421. The a 1,2-diacyl-sn-glycero-3-phospho-(1D-myo-inositol-3-phosphate) site is built by Ser-376, Asp-377, Gly-378, Trp-379, Asp-380, and Arg-381. Position 421 (Arg-421) interacts with a 1,2-diacyl-sn-glycero-3-phospho-(1D-myo-inositol-3-phosphate). Thr-495 is modified (phosphothreonine). Polar residues predominate over residues 578 to 592 (PTKLTDSSTPPSGSA). A disordered region spans residues 578-602 (PTKLTDSSTPPSGSAQIAPRMQTHF).

It belongs to the protein-tyrosine phosphatase family. Non-receptor class myotubularin subfamily. In terms of assembly, heterodimer with MTMR12. Interacts with KMT2A/MLL1 (via SET domain). Interacts with DES in skeletal muscle but not in cardiac muscle. Interacts with SPEG.

The protein localises to the cytoplasm. The protein resides in the cell membrane. It localises to the cell projection. It is found in the filopodium. Its subcellular location is the ruffle. The protein localises to the late endosome. The protein resides in the myofibril. It localises to the sarcomere. It carries out the reaction a 1,2-diacyl-sn-glycero-3-phospho-(1D-myo-inositol-3-phosphate) + H2O = a 1,2-diacyl-sn-glycero-3-phospho-(1D-myo-inositol) + phosphate. The enzyme catalyses a 1,2-diacyl-sn-glycero-3-phospho-(1D-myo-inositol-3,5-bisphosphate) + H2O = a 1,2-diacyl-sn-glycero-3-phospho-(1D-myo-inositol-5-phosphate) + phosphate. The catalysed reaction is 1,2-dioctanoyl-sn-glycero-3-phospho-(1-D-myo-inositol-3-phosphate) + H2O = 1,2-dioctanoyl-sn-glycero-3-phospho-(1D-myo-inositol) + phosphate. It catalyses the reaction 1,2-dioctanoyl-sn-glycero-3-phospho-(1D-myo-inositol-3,5-bisphosphate) + H2O = 1,2-dioctanoyl-sn-glycero-3-phospho-(1D-myo-inositol-5-phosphate) + phosphate. It carries out the reaction 1,2-dihexadecanoyl-sn-glycero-3-phospho-(1D-myo-inositol-3,5-phosphate) + H2O = 1,2-dihexadecanoyl-sn-glycero-3-phospho-(1D-myo-inositol-5-phosphate) + phosphate. Its activity is regulated as follows. Allosterically activated by phosphatidylinositol 5-phosphate (PI5P). In terms of biological role, lipid phosphatase which dephosphorylates phosphatidylinositol 3-monophosphate (PI3P) and phosphatidylinositol 3,5-bisphosphate (PI(3,5)P2). Has also been shown to dephosphorylate phosphotyrosine- and phosphoserine-containing peptides. Negatively regulates EGFR degradation through regulation of EGFR trafficking from the late endosome to the lysosome. Plays a role in vacuolar formation and morphology. Regulates desmin intermediate filament assembly and architecture. Plays a role in mitochondrial morphology and positioning. Required for skeletal muscle maintenance but not for myogenesis. In skeletal muscles, stabilizes MTMR12 protein levels. In Rattus norvegicus (Rat), this protein is Myotubularin.